The following is a 364-amino-acid chain: Protein PTOV1 homolog (364 aa).

The disordered stretch occupies residues 187–207 (AKRKPGVKTPKQPQPEEPPPV).

This sequence belongs to the Mediator complex subunit 25 family. PTOV1 subfamily.

The polypeptide is Protein PTOV1 homolog (Drosophila melanogaster (Fruit fly)).